We begin with the raw amino-acid sequence, 130 residues long: Small ribosomal subunit protein uS8 (130 aa).

It belongs to the universal ribosomal protein uS8 family. Part of the 30S ribosomal subunit.

One of the primary rRNA binding proteins, it binds directly to 16S rRNA central domain where it helps coordinate assembly of the platform of the 30S subunit. The polypeptide is Small ribosomal subunit protein uS8 (Methanococcus maripaludis (strain C7 / ATCC BAA-1331)).